Here is a 600-residue protein sequence, read N- to C-terminus: Proline--tRNA ligase (600 aa).

This sequence belongs to the class-II aminoacyl-tRNA synthetase family. ProS type 1 subfamily. As to quaternary structure, homodimer.

The protein localises to the cytoplasm. It carries out the reaction tRNA(Pro) + L-proline + ATP = L-prolyl-tRNA(Pro) + AMP + diphosphate. In terms of biological role, catalyzes the attachment of proline to tRNA(Pro) in a two-step reaction: proline is first activated by ATP to form Pro-AMP and then transferred to the acceptor end of tRNA(Pro). As ProRS can inadvertently accommodate and process non-cognate amino acids such as alanine and cysteine, to avoid such errors it has two additional distinct editing activities against alanine. One activity is designated as 'pretransfer' editing and involves the tRNA(Pro)-independent hydrolysis of activated Ala-AMP. The other activity is designated 'posttransfer' editing and involves deacylation of mischarged Ala-tRNA(Pro). The misacylated Cys-tRNA(Pro) is not edited by ProRS. The protein is Proline--tRNA ligase of Synechococcus elongatus (strain ATCC 33912 / PCC 7942 / FACHB-805) (Anacystis nidulans R2).